The sequence spans 404 residues: uncharacterized protein (404 aa).

This is an uncharacterized protein from Alcelaphine herpesvirus 1 (strain C500) (AlHV-1).